We begin with the raw amino-acid sequence, 434 residues long: 3-phosphoshikimate 1-carboxyvinyltransferase (434 aa).

Positions 22, 23, and 27 each coordinate 3-phosphoshikimate. Lysine 22 provides a ligand contact to phosphoenolpyruvate. Glycine 93 and arginine 121 together coordinate phosphoenolpyruvate. The 3-phosphoshikimate site is built by serine 168, serine 169, glutamine 170, serine 199, aspartate 320, and lysine 347. Glutamine 170 provides a ligand contact to phosphoenolpyruvate. The active-site Proton acceptor is aspartate 320. Phosphoenolpyruvate contacts are provided by arginine 351, arginine 394, and lysine 419.

Belongs to the EPSP synthase family. Monomer.

The protein resides in the cytoplasm. The catalysed reaction is 3-phosphoshikimate + phosphoenolpyruvate = 5-O-(1-carboxyvinyl)-3-phosphoshikimate + phosphate. It functions in the pathway metabolic intermediate biosynthesis; chorismate biosynthesis; chorismate from D-erythrose 4-phosphate and phosphoenolpyruvate: step 6/7. Its function is as follows. Catalyzes the transfer of the enolpyruvyl moiety of phosphoenolpyruvate (PEP) to the 5-hydroxyl of shikimate-3-phosphate (S3P) to produce enolpyruvyl shikimate-3-phosphate and inorganic phosphate. The protein is 3-phosphoshikimate 1-carboxyvinyltransferase of Burkholderia orbicola (strain AU 1054).